The primary structure comprises 237 residues: Proteasome subunit beta 2 (237 aa).

Polar residues predominate over residues 1 to 14 (MNNWSQGSTPQGSD). Residues 1–42 (MNNWSQGSTPQGSDPSPYAPELGSLPDGSQSDDHGDTVNKTG) constitute a propeptide, removed in mature form; by autocatalysis. A disordered region spans residues 1 to 45 (MNNWSQGSTPQGSDPSPYAPELGSLPDGSQSDDHGDTVNKTGTTT). The active-site Nucleophile is Thr-43.

The protein belongs to the peptidase T1B family. As to quaternary structure, the 20S proteasome core is composed of 14 alpha and 14 beta subunits that assemble into four stacked heptameric rings, resulting in a barrel-shaped structure. The two inner rings, each composed of seven catalytic beta subunits, are sandwiched by two outer rings, each composed of seven alpha subunits. The catalytic chamber with the active sites is on the inside of the barrel. Has a gated structure, the ends of the cylinder being occluded by the N-termini of the alpha-subunits. Is capped at one or both ends by the proteasome regulatory ATPase, PAN.

The protein resides in the cytoplasm. It catalyses the reaction Cleavage of peptide bonds with very broad specificity.. With respect to regulation, the formation of the proteasomal ATPase PAN-20S proteasome complex, via the docking of the C-termini of PAN into the intersubunit pockets in the alpha-rings, triggers opening of the gate for substrate entry. Interconversion between the open-gate and close-gate conformations leads to a dynamic regulation of the 20S proteasome proteolysis activity. Its function is as follows. Component of the proteasome core, a large protease complex with broad specificity involved in protein degradation. The polypeptide is Proteasome subunit beta 2 (Haloterrigena turkmenica (strain ATCC 51198 / DSM 5511 / JCM 9101 / NCIMB 13204 / VKM B-1734 / 4k) (Halococcus turkmenicus)).